A 171-amino-acid chain; its full sequence is MIDTDGFRPNVGIILADGSGRVLWARRVGGQDAWQFPQGGIKESESAEQALYRELQEEVGLKAEDVEILAVTQGWLRYRLPQKLVRQKEPRCVGQKQKWFLLKMLAEDSAVDLIGGGPPEFDEWRWVSYWYPLSKVVSFKREVYRRALKELVAPHNSLLSGLPLVDGESLC.

One can recognise a Nudix hydrolase domain in the interval 6-149; the sequence is GFRPNVGIIL…KREVYRRALK (144 aa). Positions 39–60 match the Nudix box motif; it reads GGIKESESAEQALYRELQEEVG.

It belongs to the Nudix hydrolase family. RppH subfamily. The cofactor is a divalent metal cation.

Its function is as follows. Accelerates the degradation of transcripts by removing pyrophosphate from the 5'-end of triphosphorylated RNA, leading to a more labile monophosphorylated state that can stimulate subsequent ribonuclease cleavage. The sequence is that of RNA pyrophosphohydrolase from Teredinibacter turnerae (strain ATCC 39867 / T7901).